The primary structure comprises 345 residues: NADPH-dependent curcumin reductase (345 aa).

Positions Met1–Arg10 are enriched in basic residues. Residues Met1–Glu24 are disordered. Lys186, Asn225, and Asn333 together coordinate NADP(+).

As to quaternary structure, homodimer.

The enzyme catalyses tetrahydrocurcumin + 2 NADP(+) = curcumin + 2 NADPH + 2 H(+). It carries out the reaction tetrahydrocurcumin + NADP(+) = dihydrocurcumin + NADPH + H(+). It catalyses the reaction dihydrocurcumin + NADP(+) = curcumin + NADPH + H(+). Inhibited by thiol-specific reagents (p-chloromercuribenzoate and 5,5'-dithio-bis-2-nitrobenzoate). In terms of biological role, catalyzes the metal-independent reduction of curcumin to dihydrocurcumin (DHC) as an intermediate product, followed by further reduction to tetrahydrocurcumin (THC) as an end product. It also acts on 3-octene-2-one, 3-hepten-2-one, resveratrol, and trans-2-octenal. This chain is NADPH-dependent curcumin reductase, found in Escherichia coli (strain K12).